An 833-amino-acid chain; its full sequence is MPLEMDQKISKHTFGCQRSSTSDDDSGCAMEEYTWVPPGLRPEQVQLYFACLPEEKVPYVNSVGEKCRIKQLLYQLPPHDNEVRYCQSLSEEEKKELQMFSAQRKKEALGRGNIKMLSRAVMHAMCEKCGEKINGGEIAIFVSRAGPGVCWHPSCFVCSTCNELLVDLIYFYQDGKIHCGRHHAELLKPRCSACDEIIFADECTEAEGRHWHMNHFSCYECETVLGGQRYIMKDGRPFCCGCFESHYAEYCESCGEHIGVDHAQMTYDGQHWHATETCFSCAQCKVSLLGCPFLPKKGRIYCSKACSLGEDVHASDSSDSAFQSARSRESRRSVRMGKSSRSADQCRQSLLLSPALNYKFPGMSGNADDTLSRKMDDLSISRQGAGFDNDFWKARDEQETPEDHEEWAEHDDYMTQLLLKFGEKGLFQQAPEDNRSNEHWMSDNIKGKNDLQRNSRNQSLASKKYQSDMYWAQSQDGLGDSAYGSHPGPASSRKLQELDMDHGASGYMHEKMPWYKRSLECLSDNLKPQNENICDSMDSLALSNITGASVDRENKPRPSLFSYQNFQDLNTRDCEKMSNMGTLNSSMLNRSTESLKSLNSEICQEKPPPEEKPMHTSALRRSKSQTRPQVKFSDDVIDNGDCGSIDIRQPPMSERSRRRVYNFEERSQRPHHHRRRKSRKSRSENALHLATESKPSGRERNPRFYTAEDYEKLFHNRSAHEVQAYIQNADLFGQYPNAASNFGLPSQVVDKFLGLYGEDEDSWCSTCSSSSSDSEEEGYFLGQPIPKPLPQRYQYFSDDLCSPTNALSSSQFSQRTTKSKKKKGHKGKNCIIS.

Residues 1–22 (MPLEMDQKISKHTFGCQRSSTS) are disordered. The PET domain occupies 14–122 (FGCQRSSTSD…NIKMLSRAVM (109 aa)). 3 consecutive LIM zinc-binding domains span residues 124–188 (AMCE…ELLK), 189–249 (PRCS…HYAE), and 250–313 (YCES…EDVH). 5 disordered regions span residues 312–346 (VHAS…ADQC), 432–456 (EDNR…RNSR), 603–702 (CQEK…ERNP), 767–786 (CSSS…QPIP), and 805–833 (NALS…CIIS). Composition is skewed to basic and acidic residues over residues 432 to 453 (EDNR…DLQR) and 603 to 614 (CQEKPPPEEKPM). Positions 669 to 680 (RPHHHRRRKSRK) are enriched in basic residues. The span at 817 to 833 (TKSKKKKGHKGKNCIIS) shows a compositional bias: basic residues. Position 830 is a cysteine methyl ester (Cys-830). A lipid anchor (S-farnesyl cysteine) is attached at Cys-830. A propeptide spans 831–833 (IIS) (removed in mature form).

The protein belongs to the prickle / espinas / testin family. Interacts with dvl2/dsh and mapk8/jnk1.

It localises to the cell membrane. Its function is as follows. Acts in a planar cell polarity (PCP) complex; polarization along the apical/basal axis of epithelial cells. Regulates the polarized assembly of fibronectrin on the surface of the mesoderm during gastrulation. Essential for gastrulation cell movements, cooperating with dvl2/dsh to activate jnk. Acts together with tes to control axial elongation. The chain is Prickle-like protein 1 from Xenopus tropicalis (Western clawed frog).